A 96-amino-acid polypeptide reads, in one-letter code: Cytochrome c-553 (96 aa).

An N-terminal signal peptide occupies residues M1 to A19. C29, C32, H33, and M73 together coordinate heme c.

It belongs to the cytochrome c family. In terms of processing, binds 1 heme c group covalently per subunit.

It is found in the periplasm. Natural electron acceptor for a formate dehydrogenase. This chain is Cytochrome c-553, found in Helicobacter pylori (strain J99 / ATCC 700824) (Campylobacter pylori J99).